The chain runs to 213 residues: Pyridoxine/pyridoxamine 5'-phosphate oxidase (213 aa).

Substrate is bound by residues 9 to 12 (RKDY) and Lys67. FMN-binding positions include 62–67 (RIVLLK), 77–78 (FT), Arg83, Lys84, and Gln106. Residues Tyr124, Arg128, and Ser132 each coordinate substrate. FMN contacts are provided by residues 141–142 (QS) and Trp186. 192–194 (RLH) is a substrate binding site. Arg196 is an FMN binding site.

This sequence belongs to the pyridoxamine 5'-phosphate oxidase family. Homodimer. The cofactor is FMN.

The enzyme catalyses pyridoxamine 5'-phosphate + O2 + H2O = pyridoxal 5'-phosphate + H2O2 + NH4(+). The catalysed reaction is pyridoxine 5'-phosphate + O2 = pyridoxal 5'-phosphate + H2O2. The protein operates within cofactor metabolism; pyridoxal 5'-phosphate salvage; pyridoxal 5'-phosphate from pyridoxamine 5'-phosphate: step 1/1. It participates in cofactor metabolism; pyridoxal 5'-phosphate salvage; pyridoxal 5'-phosphate from pyridoxine 5'-phosphate: step 1/1. Catalyzes the oxidation of either pyridoxine 5'-phosphate (PNP) or pyridoxamine 5'-phosphate (PMP) into pyridoxal 5'-phosphate (PLP). The polypeptide is Pyridoxine/pyridoxamine 5'-phosphate oxidase (Cyanothece sp. (strain PCC 7425 / ATCC 29141)).